The chain runs to 104 residues: MSYAVIVTGGKQYKVAEGEFLKIEKLEVATGESVTFDRVLLVANGEEVTIGAPVVAGAKVVAEVVSQGRHDKVRIIKFRRRKHHMKRMGHRQWFTEIKITGIQA.

This sequence belongs to the bacterial ribosomal protein bL21 family. Part of the 50S ribosomal subunit. Contacts protein L20.

Its function is as follows. This protein binds to 23S rRNA in the presence of protein L20. The chain is Large ribosomal subunit protein bL21 from Pseudomonas putida (strain GB-1).